Here is a 179-residue protein sequence, read N- to C-terminus: Nicotinamide-nucleotide adenylyltransferase (179 aa).

This sequence belongs to the archaeal NMN adenylyltransferase family.

It localises to the cytoplasm. The catalysed reaction is beta-nicotinamide D-ribonucleotide + ATP + H(+) = diphosphate + NAD(+). Its pathway is cofactor biosynthesis; NAD(+) biosynthesis; NAD(+) from nicotinamide D-ribonucleotide: step 1/1. The chain is Nicotinamide-nucleotide adenylyltransferase from Thermoplasma acidophilum (strain ATCC 25905 / DSM 1728 / JCM 9062 / NBRC 15155 / AMRC-C165).